The primary structure comprises 379 residues: Carboxypeptidase Y-deficient protein 8 (379 aa).

A compositionally biased stretch (low complexity) spans His-84–Val-107. Positions His-84 to Asp-108 are disordered. Ser-216 is subject to Phosphoserine.

The protein belongs to the VPS26 family. As to quaternary structure, component of the retromer complex which consists of VPS29, VPS26, VPS35, VPS5 and VPS17. Component of a retromer subcomplex consisting of VPS29, VPS26 and VPS35.

Plays a role in vesicular protein sorting. Required for the endosome-to-Golgi retrieval of the vacuolar protein sorting receptor VPS10. Component of the membrane-associated retromer complex which is essential in endosome-to-Golgi retrograde transport. The VPS29-VPS26-VPS35 subcomplex may be involved in cargo selection. In Saccharomyces cerevisiae (strain ATCC 204508 / S288c) (Baker's yeast), this protein is Carboxypeptidase Y-deficient protein 8 (PEP8).